The primary structure comprises 1581 residues: MKKIFGFRSKGPSPLGPSARPRSNCVGFGRESASGSHVPRYHIHDKDMGKIHKAASVGDVAKVQHILILGKSGVNDRDKKDRTALHLACAYGHPEVVTLLVERKCEIDARDSESSTALIKAVQCQEEECAAILLDHGADPNVMDSSGNTALHYAVYSENTSMAAKLLAHNANIEAKNKDDLTPMLLAVKENKQHIVEFLVKKKASIHAVDQLGSNRQMFEYDGKRLQRSENSNPVDNGSEDGSLTRSYNTPGPADSWPTSDEEDYNFDNKNVPKINLTELWTAAQQSRKNQTKCGFEELDNGARFDDSDSPSESEDAIEVEPAPSVRVQTLSPSRQSPDPVEGATELAIEGEENGTDVIESASQEQPNHDNLTRADGWHKSNKSEMMSALGLGEDEDEDSPWDSESISESVSLKDVGHFSGTADQTGKRRAHGQIEDVTYIPSCMSGSRNFKMAKLEESRNVGLPVAHMEAPRKYVIMEPTIERRAPVLNKTETVGMTDAQTFKSEPESVSREEQTRLSGSEDSQQKVEEKRKYKNNEAEPSGNLYSGAADGGADVKPQSGDTENQQSPREGSEGRGSGPALLMKEAKKMENEKWVSREPARTAMSERTGLPTGGWPQMQDGSCWSDTDQSEARPTKKTSSKHNKDSGQTAAVDNLDDFTESSETASEDHELQGPDSESILCAIEHLRLECKDTASLLKIRDAVYSYKRLIELKRSHCELLTGKLKRMENKYKGLQKEMSETEEVKSRLEHEKVGWEQELCRLRFALKQEEEKRRSADQLSEKTMEQLRRKGEQCQSEVEARQQLEASLRTLEMELKTVKSHLNQVLEERNETQRQLSREQNARMLQDGILASHLCKQKEIEMTQKKMTSEVSVSHEKEKDLLHKNQRLQDEVAVLRLEMDTIKSHNQEKEKRYLEDIKIANEKNDNLQRMVKLNMLSSKLDNEKQNKERLETDVESFRSRLASALHDHAEIQTAKRDLEIAFQRARDEWFRVKDKMNFDMSNLRDNNEVLSQQLSKTERKLNSLEIEFHHTKDELREKTLALKHAQRDLSQTQCQMKEVEHMFQDEQGKVSKFMGKQESIEERLAQLQSENTLLRQQLDDAANKAESKDKTIVNIQDQFQDVLTRFQAESQRHSLRLEDRNQELVSECSHLRERLCQYENEKAEREVVVRQLQQELADTLKKQSMSEASLEVSSRYRSNLEEEARDLKKKLGQLRSQLQEARDQHREAVHHAEKMEDHLQKLELEKSKFEITIKKQSEEIDQLQENLSRVNLSEEDKEKLQKLTELKESLECTVDQEQKRSSALEKELMRTIQKKCGKLEKNKKQLEQEVVNLRSHMEKNMVEHSQAQQYAREVEERARQDLVEKLKQVNLFLQAQAASQESLEQLRENSNASVRSQMELRIKDLESQLYRMKAQEDFDKIELEKYKQLYQEEFRARKSLSSKLNKTSEKLEEASSKLLLEEQQNRSLLSTLSTRPVVECPCVGSLHNSLVFNRTLIPRENIVVPTSGLQPSNKRVEIYLTKMHQELEKSINRELKEATAELESEFCRVSPLGSATKASQDQLSDASQEFIDILKKKYMI.

The interval 1–22 (MKKIFGFRSKGPSPLGPSARPR) is disordered. Position 13 is a phosphoserine (S13). 5 ANK repeats span residues 46-76 (KDMG…GVND), 80-109 (KDRT…EIDA), 113-142 (ESST…DPNV), 146-175 (SGNT…NIEA), and 179-208 (DDLT…SIHA). 4 disordered regions span residues 225 to 270 (RLQR…FDNK), 299 to 343 (LDNG…PVEG), 361 to 381 (SASQ…WHKS), and 488 to 652 (VLNK…QTAA). The segment covering 229–250 (SENSNPVDNGSEDGSLTRSYNT) has biased composition (polar residues). S239 and S260 each carry phosphoserine. Over residues 308-319 (SDSPSESEDAIE) the composition is skewed to acidic residues. Residues 327–337 (RVQTLSPSRQS) show a composition bias toward polar residues. The segment covering 367–381 (PNHDNLTRADGWHKS) has biased composition (basic and acidic residues). The span at 491 to 504 (KTETVGMTDAQTFK) shows a compositional bias: polar residues. 3 stretches are compositionally biased toward basic and acidic residues: residues 505–516 (SEPESVSREEQT), 524–538 (SQQK…KNNE), and 585–601 (KEAK…REPA). S511 bears the Phosphoserine mark. Coiled coils occupy residues 715–845 (RSHC…NARM), 876–1345 (HEKE…MVEH), 1396–1470 (RSQM…RSLL), and 1521–1550 (LTKM…FCRV).

Interacts with TRIO. Interacts with GPS2. Interacts with CCDC85B. Interacts with HMMR. In terms of tissue distribution, widely expressed. Expressed in the arcuate and ventromedial nuclei within the hypothalamus and in the ependyma and the circumventricular organs (at protein level).

It is found in the cytoplasm. Its subcellular location is the cytosol. Acts as a regulator of adipogenesis. Involved in the regulation of the feeding behavior. This chain is Ankyrin repeat domain-containing protein 26 (Ankrd26), found in Mus musculus (Mouse).